Here is an 816-residue protein sequence, read N- to C-terminus: H(+)/Cl(-) exchange transporter 5 (816 aa).

Over 1 to 124 (MAMWQGAMDN…WALIHSVSDA (124 aa)) the chain is Cytoplasmic. 2 helical membrane passes run 125-162 (FSGW…ICTG) and 208-231 (VNYF…VKAF). The Selectivity filter part_1 motif lies at 237–241 (GSGIP). Chloride is bound at residue Ser238. Positions 240 to 247 (IPEIKTIL) form an intramembrane region, helical. Helical transmembrane passes span 256 to 275 (LGKW…VSSG) and 281 to 300 (EGPL…HCFN). The short motif at 279–283 (GKEGP) is the Selectivity filter part_2 element. 2 intramembrane regions (helical) span residues 312–324 (VLSA…VSVA) and 328–336 (PIGGVLFSL). 5 helical membrane passes run 348–366 (LWRS…RSIN), 389–414 (LVPF…IAWC), 422–442 (LGKY…ILAF), 498–518 (MWQL…TFGM), and 523–542 (GLFI…LGVG). The Selectivity filter part_3 signature appears at 523 to 527 (GLFIP). Chloride is bound at residue Phe525. The helical intramembrane region spans 570 to 584 (GLYAMVGAAACLGGV). The segment at residues 585 to 587 (TRM) is an intramembrane region (note=Loop between two helices). An intramembrane region (helical) is located at residues 588–599 (TVSLVVIMFELT). The segment at residues 600–604 (GGLEY) is an intramembrane region (note=Loop between two helices). The helical transmembrane segment at 605 to 622 (IVPLMAAAMTSKWVADAL) threads the bilayer. Over 623–816 (GREGIYDAHI…NQDPDSILFN (194 aa)) the chain is Cytoplasmic. Tyr628 is a chloride binding site. CBS domains are found at residues 656–720 (MKPR…ARKK) and 752–812 (ILDL…DPDS). Residues Thr666, 687–689 (YSG), and 794–797 (TKKD) contribute to the ATP site.

The protein belongs to the chloride channel (TC 2.A.49) family. ClC-5/CLCN5 subfamily. As to quaternary structure, interacts with NEDD4 and NEDD4L. Ubiquitinated by NEDD4L in the presence of albumin; which promotes endocytosis and proteasomal degradation. As to expression, kidney specific.

The protein resides in the golgi apparatus membrane. It is found in the endosome membrane. Its subcellular location is the cell membrane. It catalyses the reaction 2 chloride(in) + H(+)(out) = 2 chloride(out) + H(+)(in). In terms of biological role, proton-coupled chloride transporter. Functions as antiport system and exchanges chloride ions against protons. Important for normal acidification of the endosome lumen. May play an important role in renal tubular function. The CLC channel family contains both chloride channels and proton-coupled anion transporters that exchange chloride or another anion for protons. The absence of conserved gating glutamate residues is typical for family members that function as channels. The chain is H(+)/Cl(-) exchange transporter 5 (Clcn5) from Mus musculus (Mouse).